Reading from the N-terminus, the 442-residue chain is Proline--tRNA ligase (442 aa).

This sequence belongs to the class-II aminoacyl-tRNA synthetase family. ProS type 2 subfamily. In terms of assembly, homodimer.

Its subcellular location is the cytoplasm. It carries out the reaction tRNA(Pro) + L-proline + ATP = L-prolyl-tRNA(Pro) + AMP + diphosphate. Catalyzes the attachment of proline to tRNA(Pro) in a two-step reaction: proline is first activated by ATP to form Pro-AMP and then transferred to the acceptor end of tRNA(Pro). This is Proline--tRNA ligase from Brucella melitensis biotype 2 (strain ATCC 23457).